A 453-amino-acid chain; its full sequence is Sodium/alanine symporter AgcS (453 aa).

The Extracellular portion of the chain corresponds to 1 to 17 (MDFVSLVNTVNSFVWGP). The chain crosses the membrane as a helical span at residues 18 to 32 (YMLVLLLGTGIFLTL). Residues 33 to 67 (RLGFMQIHTLPYALKLAFSKHQDETSEGDISHFQA) lie on the Cytoplasmic side of the membrane. A helical transmembrane segment spans residues 68–89 (LMTALAATIGTGNIAGVATAYV). Thr75 contributes to the D-alanine binding site. Thr75 and Gly79 together coordinate L-alanine. Asn80 contributes to the D-alanine binding site. Over 90–92 (LGG) the chain is Extracellular. The chain crosses the membrane as a helical span at residues 93 to 111 (PGAIFWMWVTAFFGMATKY). Residues 112–148 (AEAVLAIKYRTVDDNGEMAGGPMYFLEKGLPDHGLGK) are Cytoplasmic-facing. Residues 149–179 (ILGVAFAFFGAFAAFGIGNMVQTNSVADAVA) traverse the membrane as a helical segment. Gln170 is a binding site for D-alanine. Residue Gln170 coordinates L-alanine. At 180-186 (SNFGVDP) the chain is on the extracellular side. Residues 187–202 (LITGFVLAIFTAAVIL) traverse the membrane as a helical segment. The Cytoplasmic segment spans residues 203–206 (GGIK). The chain crosses the membrane as a helical span at residues 207 to 233 (SIGKATGIIVPFMAVFYILAGLVILAM). The Extracellular portion of the chain corresponds to 234-258 (NIGYIIPAFGTIFSSAFNFSAGFGA). Residues 259 to 274 (LIGTAIMWGVKRGVFS) traverse the membrane as a helical segment. 273–274 (FS) lines the D-alanine pocket. L-alanine is bound at residue 273-276 (FSNE). Residues 275-300 (NEAGLGSAPIAAAAAKTDHPGRQALV) are Cytoplasmic-facing. Residues 301-322 (SMTGTFLDTIVVCTITGLVLTI) traverse the membrane as a helical segment. Residues 323-350 (AGLKAFPGLTDLTGASLTAASFDALMPM) lie on the Extracellular side of the membrane. A helical transmembrane segment spans residues 351-378 (GGLIVTIGLVFFAYSTVLGWSYYGEKCF). The Cytoplasmic segment spans residues 379-386 (EYLIGTKG). Residues 387-403 (IRLYRIAFVLVAFWGAT) traverse the membrane as a helical segment. At 404 to 408 (ASLPL) the chain is on the extracellular side. A helical membrane pass occupies residues 409-430 (VWNIADTLNGAMAIPNLIGLLL). Residues 431-453 (LSGVVVSETKAFNEIRKNEAKNA) lie on the Cytoplasmic side of the membrane.

It belongs to the alanine or glycine:cation symporter (AGCS) (TC 2.A.25) family.

It localises to the cell membrane. It carries out the reaction D-alanine(in) + Na(+)(in) = D-alanine(out) + Na(+)(out). The enzyme catalyses L-alanine(in) + Na(+)(in) = L-alanine(out) + Na(+)(out). The catalysed reaction is glycine(in) + Na(+)(in) = glycine(out) + Na(+)(out). Catalyzes the sodium-dependent uptake of extracellular D-alanine and L-alanine. Can also transport glycine. Binds glycine and both enantiomers of alanine, while strictly excluding other amino acids. The chain is Sodium/alanine symporter AgcS from Methanococcus maripaludis (strain DSM 14266 / JCM 13030 / NBRC 101832 / S2 / LL).